Consider the following 127-residue polypeptide: Copper resistance protein C (127 aa).

The N-terminal stretch at 1–25 (MFAFRSIATTVVMVAASLASASAFA) is a signal peptide. Residues His26, Met65, Met68, Met71, Met76, and His116 each contribute to the Cu cation site.

It belongs to the CopC family.

The protein resides in the periplasm. Its function is as follows. Copper-binding protein involved in copper resistance. The protein is Copper resistance protein C of Xanthomonas campestris pv. juglandis (Xanthomonas arboricola pv. juglandis).